Here is a 263-residue protein sequence, read N- to C-terminus: uncharacterized protein (263 aa).

It is found in the mitochondrion. This is an uncharacterized protein from Schizosaccharomyces pombe (strain 972 / ATCC 24843) (Fission yeast).